Reading from the N-terminus, the 2081-residue chain is Non-reducing polyketide synthase terA (2081 aa).

Residues T85–H190 are N-terminal acylcarrier protein transacylase (SAT) domain (SAT). The region spanning A316–D749 is the Ketosynthase family 3 (KS3) domain. Active-site for beta-ketoacyl synthase activity residues include C488, H623, and H667. The tract at residues L849–E1147 is malonyl-CoA:ACP transacylase (MAT) domain. The N-terminal hotdog fold stretch occupies residues Q1230–T1364. The PKS/mFAS DH domain occupies Q1230 to N1539. The segment at V1259 to A1536 is product template (PT) domain. The Proton acceptor; for dehydratase activity role is filled by H1262. The segment at Y1392–N1539 is C-terminal hotdog fold. Catalysis depends on D1452, which acts as the Proton donor; for dehydratase activity. The segment at K1549–P1578 is disordered. Over residues Q1558 to Q1572 the composition is skewed to low complexity. Residues K1580–A1658 enclose the Carrier 1 domain. S1617 carries the post-translational modification O-(pantetheine 4'-phosphoryl)serine. Residues G1659 to S1700 are disordered. A compositionally biased stretch (acidic residues) spans N1665–A1677. The Carrier 2 domain occupies V1699–M1776. S1736 bears the O-(pantetheine 4'-phosphoryl)serine mark. The segment at G1783–P1809 is disordered. The interval T1840–Q2070 is thioesterase (TE) domain.

The catalysed reaction is 3 malonyl-CoA + acetyl-CoA + 2 H(+) = orsellinate + 3 CO2 + 4 CoA. The protein operates within secondary metabolite biosynthesis. Its function is as follows. Non-reducing polyketide synthase; part of the gene cluster that mediates the biosynthesis of terrein, a fungal metabolite with ecological, antimicrobial, antiproliferative, and antioxidative activities. The first step in the pathway is performed by the polyketide synthase terA that produces 4-hydroxy-6-methylpyranon (4-HMP), orsellinic acid (OA), and 2,3-dehydro-6-hydroxymellein (2,3-dehydro-6-HM) by condensing acetyl-CoA with two, three, or four malonyl-CoA units, respectively. 4-HMP and OA are not pathway intermediates, but are rather shunt or side products. 2,3-dehydro-6-HM is further converted to 6-hydroxymellein (6-HM) by the 6-hydroxymellein synthase terB. The monooxygenases terC and terD, the multicopper oxidase terE and the Kelch-like protein terF are then involved in the transformation of 6-HM to terrein. Even if they are co-regulated with the other terrein cluster genes, terH and terI seem to be dispensable for terrein production; whereas one or both of the 2 transporters terG and terJ are probably required for efficient secretion of metabolites. The chain is Non-reducing polyketide synthase terA from Aspergillus terreus (strain NIH 2624 / FGSC A1156).